The following is a 399-amino-acid chain: CLOCK-interacting pacemaker (399 aa).

The segment covering 1–12 has biased composition (basic and acidic residues); that stretch reads MERKNSSRESPR. 2 disordered regions span residues 1 to 85 and 159 to 224; these read MERK…AKNA and SYTK…KLAE. Position 213 is a phosphoserine (Ser213). Residues 333–359 are a coiled coil; sequence TLKTKELIRQNQATQVELDQLKEQTQL. Polar residues predominate over residues 378 to 388; the sequence is SLTPGSSNTGS. A disordered region spans residues 378–399; it reads SLTPGSSNTGSDLEAFSDHPDI.

As to quaternary structure, interacts with CLOCK. Forms a ternary complex with the CLOCK-BMAL1 heterodimer. Interacts with CAD and HSPA5.

The protein resides in the nucleus. It localises to the cytoplasm. Its subcellular location is the cytosol. Transcriptional repressor which may act as a negative-feedback regulator of CLOCK-BMAL1 transcriptional activity in the circadian-clock mechanism. May stimulate BMAL1-dependent phosphorylation of CLOCK. However, the physiological relevance of these observations is unsure, since experiments in knockout mice showed that CIPC is not critially required for basic circadian clock. This is CLOCK-interacting pacemaker (CIPC) from Pongo abelii (Sumatran orangutan).